The primary structure comprises 549 residues: Cation/acetate symporter ActP (549 aa).

Transmembrane regions (helical) follow at residues 33–53 (WQAIIMFLIFVLLTLYITYWA), 76–96 (GLAIAGDFMSAASFLGISALV), 103–123 (GLIYSLGFLVGWPIILFLIAE), 149–169 (LSACGSLVVVALYLIAQMVGA), 183–203 (IAVVLVGVLMVMYVLFGGMLA), 206–226 (WVQIIKAVLLLFGASFMAFMV), 262–282 (ISALSLGLGLMFGTAGLPHIL), 303–323 (GFMGYFYILTFIIGFGAIMLV), 355–375 (LFLGFISAVAFATILAVVAGL), 404–424 (VSKITVLILGVVAILLGILFE), 428–448 (IAFMVGLAFSIAASCNFPIIL), 463–483 (IGGWLGLLTAVILMVLGPTIW), and 493–513 (IFPYEYPALFSIAVAFIGIWF).

This sequence belongs to the sodium:solute symporter (SSF) (TC 2.A.21) family.

The protein resides in the cell inner membrane. Functionally, transports acetate. The protein is Cation/acetate symporter ActP of Enterobacter sp. (strain 638).